Here is a 354-residue protein sequence, read N- to C-terminus: tRNA N6-adenosine threonylcarbamoyltransferase (354 aa).

Residues His115 and His119 each coordinate Fe cation. Substrate-binding positions include 138-142 (LVSGG), Asp171, Gly184, and Asn276. Residue Asp304 participates in Fe cation binding.

Belongs to the KAE1 / TsaD family. Fe(2+) serves as cofactor.

It is found in the cytoplasm. It carries out the reaction L-threonylcarbamoyladenylate + adenosine(37) in tRNA = N(6)-L-threonylcarbamoyladenosine(37) in tRNA + AMP + H(+). Functionally, required for the formation of a threonylcarbamoyl group on adenosine at position 37 (t(6)A37) in tRNAs that read codons beginning with adenine. Is involved in the transfer of the threonylcarbamoyl moiety of threonylcarbamoyl-AMP (TC-AMP) to the N6 group of A37, together with TsaE and TsaB. TsaD likely plays a direct catalytic role in this reaction. The polypeptide is tRNA N6-adenosine threonylcarbamoyltransferase (Xanthomonas campestris pv. campestris (strain 8004)).